The chain runs to 506 residues: Pleckstrin homology domain-containing family D member 1 (506 aa).

Residues 28–136 (KVQLYGVLWK…WLEMLQESGK (109 aa)) enclose the PH domain. Residues 146 to 391 (EAMIKSLEAQ…KVRNKEKEER (246 aa)) adopt a coiled-coil conformation. Arginine 503 carries the omega-N-methylarginine modification.

Belongs to the PLEKHD1 family.

This is Pleckstrin homology domain-containing family D member 1 (PLEKHD1) from Homo sapiens (Human).